The following is a 168-amino-acid chain: ATP synthase subunit b (168 aa).

Residues 13 to 33 form a helical membrane-spanning segment; it reads WTFLFQTLNLLVVMGLLYVFL.

Belongs to the ATPase B chain family. F-type ATPases have 2 components, F(1) - the catalytic core - and F(0) - the membrane proton channel. F(1) has five subunits: alpha(3), beta(3), gamma(1), delta(1), epsilon(1). F(0) has three main subunits: a(1), b(2) and c(10-14). The alpha and beta chains form an alternating ring which encloses part of the gamma chain. F(1) is attached to F(0) by a central stalk formed by the gamma and epsilon chains, while a peripheral stalk is formed by the delta and b chains.

Its subcellular location is the cell membrane. Its function is as follows. F(1)F(0) ATP synthase produces ATP from ADP in the presence of a proton or sodium gradient. F-type ATPases consist of two structural domains, F(1) containing the extramembraneous catalytic core and F(0) containing the membrane proton channel, linked together by a central stalk and a peripheral stalk. During catalysis, ATP synthesis in the catalytic domain of F(1) is coupled via a rotary mechanism of the central stalk subunits to proton translocation. Functionally, component of the F(0) channel, it forms part of the peripheral stalk, linking F(1) to F(0). The protein is ATP synthase subunit b of Moorella thermoacetica (strain ATCC 39073 / JCM 9320).